The sequence spans 596 residues: Histone deacetylase 9 (596 aa).

Basic and acidic residues-rich tracts occupy residues 132–153 (REKEQKMEQQRKEQEAERHRQE) and 160–172 (RSKDRVKERAVAS). Disordered regions lie at residues 132–172 (REKE…AVAS), 214–258 (HTSL…VRSR), 293–313 (SSVSSSSPVSGPSSPNNGPVA), and 522–596 (QPEG…QQVT). An interaction with mef2 region spans residues 172–222 (STEVKQKLQEFILSKSATKEPLTNGTSHSMGRHPKLWYTAAHHTSLDQSSP). Residues 221–237 (SPPPSGTSPTYKCPPPG) show a composition bias toward pro residues. The segment covering 293 to 312 (SSVSSSSPVSGPSSPNNGPV) has biased composition (low complexity). Residues 522–536 (QPEGHLEEAEEDLHG) show a composition bias toward basic and acidic residues. The segment covering 541–558 (QEKSSSIDNTRSYSSTDL) has biased composition (polar residues). Residues 567–585 (KVKEEPPDSENEIKTHLQS) show a composition bias toward basic and acidic residues. Positions 586-596 (EQKSVFAQQVT) are enriched in polar residues.

Belongs to the histone deacetylase family. HD type 2 subfamily. As to quaternary structure, homodimer. Interacts with mef2. In terms of tissue distribution, broadly expressed.

The protein localises to the nucleus. The enzyme catalyses N(6)-acetyl-L-lysyl-[histone] + H2O = L-lysyl-[histone] + acetate. In terms of biological role, devoided of intrinsic deacetylase activity, promotes the deacetylation of lysine residues on the N-terminal part of the core histones (H2A, H2B, H3 and H4) by recruiting other histone deacetylases. Histone deacetylation gives a tag for epigenetic repression and plays an important role in transcriptional regulation, cell cycle progression and developmental events. Represses MEF2-dependent transcription. The sequence is that of Histone deacetylase 9 (hdac9) from Xenopus laevis (African clawed frog).